We begin with the raw amino-acid sequence, 79 residues long: Conotoxin Leo-O1 (79 aa).

The first 22 residues, 1–22 (MKLTCMMLVAVLFLTAWTFVTA), serve as a signal peptide directing secretion. The propeptide occupies 23–51 (NVSRNGLENLFPEERHEMMNPEAAKLNNR). Intrachain disulfides connect Cys-53–Cys-70, Cys-60–Cys-74, and Cys-69–Cys-78.

The protein belongs to the conotoxin O1 superfamily. Expressed by the venom duct.

The protein localises to the secreted. This chain is Conotoxin Leo-O1, found in Conus leopardus (Leopard cone).